We begin with the raw amino-acid sequence, 408 residues long: Glutamate N-acetyltransferase (408 aa).

Thr-150, Lys-176, Thr-189, Glu-271, Asn-403, and Thr-408 together coordinate substrate. The Nucleophile role is filled by Thr-189.

This sequence belongs to the ArgJ family. As to quaternary structure, heterotetramer of two alpha and two beta chains.

The protein resides in the cytoplasm. The enzyme catalyses N(2)-acetyl-L-ornithine + L-glutamate = N-acetyl-L-glutamate + L-ornithine. The protein operates within amino-acid biosynthesis; L-arginine biosynthesis; L-ornithine and N-acetyl-L-glutamate from L-glutamate and N(2)-acetyl-L-ornithine (cyclic): step 1/1. In terms of biological role, catalyzes the transfer of the acetyl group from N(2)-acetylornithine to glutamate, forming N-acetylglutamate and L-ornithine. This is Glutamate N-acetyltransferase from Methanococcus maripaludis (strain DSM 14266 / JCM 13030 / NBRC 101832 / S2 / LL).